A 1154-amino-acid polypeptide reads, in one-letter code: Nitric oxide synthase, inducible (1154 aa).

The interval Lys22–Thr58 is disordered. A DINNN-motif; mediates interaction with SPSB1, SPSB2 and SPSB4 motif is present at residues Asp23–Asn27. The Zn(2+) site is built by Cys107 and Cys112. Residue Cys197 participates in heme b binding. Positions 260, 369, 370, and 374 each coordinate L-arginine. (6R)-L-erythro-5,6,7,8-tetrahydrobiopterin-binding residues include Arg378, Ile459, Trp460, and Phe473. Position 488 (Tyr488) interacts with heme b. Positions Leu512–Ser532 are calmodulin-binding. The Flavodoxin-like domain maps to Val536–Phe674. 5 residues coordinate FMN: Thr542, Glu543, Thr544, Lys546, and Ser547. Phosphotyrosine is present on Tyr572. FMN is bound by residues Ser588, Thr589, Ser625, Cys632, and Glu658. One can recognise an FAD-binding FR-type domain in the interval Lys727–Pro967. Arg747 is an NADP(+) binding site. FAD contacts are provided by His769, Arg903, Tyr905, Ser906, Thr921, Ala923, Tyr927, Val940, Cys941, and Ser942. NADP(+)-binding residues include Thr981, Arg1014, Ser1043, Arg1044, Lys1050, Tyr1052, Gln1054, and Asp1087.

This sequence belongs to the NOS family. As to quaternary structure, homodimer. Interacts with NHERF1. Interacts with GAPDH; induced by oxidatively-modified low-densitity lipoprotein (LDL(ox)). Interacts with S100A8 and S100A9 to form the iNOS-S100A8/9 transnitrosylase complex. Interacts with SPSB1, SPSB2 and SPSB4. Interacts with ELOC and CUL5 in the presence of SPSB1 or SPSB2 or SPSB4. Forms a complex with ASL, ASS1 and HSP90AA1; the complex regulates cell-autonomous L-arginine synthesis and citrulline recycling while channeling extracellular L-arginine to nitric oxide synthesis pathway. Heme b serves as cofactor. FAD is required as a cofactor. Requires FMN as cofactor. The cofactor is (6R)-L-erythro-5,6,7,8-tetrahydrobiopterin. Post-translationally, polyubiquitinated; mediated by SPSB1, SPSB2 and SPSB4, leading to proteasomal degradation.

It is found in the cytoplasm. It localises to the cytosol. The catalysed reaction is 2 L-arginine + 3 NADPH + 4 O2 + H(+) = 2 L-citrulline + 2 nitric oxide + 3 NADP(+) + 4 H2O. Its activity is regulated as follows. Regulated by calcium/calmodulin. Its function is as follows. Produces nitric oxide (NO) which is a messenger molecule with diverse functions throughout the body. In macrophages, NO mediates tumoricidal and bactericidal actions. Also has nitrosylase activity and mediates cysteine S-nitrosylation of cytoplasmic target proteins such PTGS2/COX2. As component of the iNOS-S100A8/9 transnitrosylase complex involved in the selective inflammatory stimulus-dependent S-nitrosylation of GAPDH implicated in regulation of the GAIT complex activity and probably multiple targets including ANXA5, EZR, MSN and VIM. Involved in inflammation, enhances the synthesis of pro-inflammatory mediators such as IL6 and IL8. The polypeptide is Nitric oxide synthase, inducible (NOS2) (Canis lupus familiaris (Dog)).